The primary structure comprises 69 residues: Putative membrane protein insertion efficiency factor (69 aa).

It belongs to the UPF0161 family.

It localises to the cell inner membrane. Functionally, could be involved in insertion of integral membrane proteins into the membrane. This Geobacter metallireducens (strain ATCC 53774 / DSM 7210 / GS-15) protein is Putative membrane protein insertion efficiency factor.